The sequence spans 1324 residues: Coiled-coil domain-containing protein 171 (1324 aa).

5 coiled-coil regions span residues 29–296 (KNET…RAAH), 325–393 (AEAV…RLQY), 453–521 (FSVV…KCAD), 599–712 (SELC…VREN), and 981–1145 (FTQR…KECV). Residues 1301 to 1312 (PHSLSSQSSPGV) show a composition bias toward polar residues. A disordered region spans residues 1301-1324 (PHSLSSQSSPGVPTNAKRPSQIGL).

The protein is Coiled-coil domain-containing protein 171 (Ccdc171) of Mus musculus (Mouse).